Reading from the N-terminus, the 914-residue chain is Protein translocase subunit SecA (914 aa).

Residues Gln87, 105–109 (GEGKT), and Asp508 contribute to the ATP site. Cys898, Cys900, Cys909, and His910 together coordinate Zn(2+).

This sequence belongs to the SecA family. In terms of assembly, monomer and homodimer. Part of the essential Sec protein translocation apparatus which comprises SecA, SecYEG and auxiliary proteins SecDF-YajC and YidC. Zn(2+) serves as cofactor.

Its subcellular location is the cell inner membrane. The protein localises to the cytoplasm. It carries out the reaction ATP + H2O + cellular proteinSide 1 = ADP + phosphate + cellular proteinSide 2.. In terms of biological role, part of the Sec protein translocase complex. Interacts with the SecYEG preprotein conducting channel. Has a central role in coupling the hydrolysis of ATP to the transfer of proteins into and across the cell membrane, serving both as a receptor for the preprotein-SecB complex and as an ATP-driven molecular motor driving the stepwise translocation of polypeptide chains across the membrane. The protein is Protein translocase subunit SecA of Xylella fastidiosa (strain 9a5c).